Here is a 152-residue protein sequence, read N- to C-terminus: Cytochrome c-type biogenesis protein CcmE 2 (152 aa).

The Cytoplasmic portion of the chain corresponds to 1–8 (MNPQRRRR). A helical; Signal-anchor for type II membrane protein membrane pass occupies residues 9–29 (LWLVLALVLAGGLATTLVAMA). At 30–152 (LQRNVAYLYT…HQVAPAKVTQ (123 aa)) the chain is on the periplasmic side. His123 and Tyr127 together coordinate heme.

Belongs to the CcmE/CycJ family.

It is found in the cell inner membrane. Functionally, heme chaperone required for the biogenesis of c-type cytochromes. Transiently binds heme delivered by CcmC and transfers the heme to apo-cytochromes in a process facilitated by CcmF and CcmH. The chain is Cytochrome c-type biogenesis protein CcmE 2 from Xanthomonas campestris pv. campestris (strain 8004).